We begin with the raw amino-acid sequence, 309 residues long: Protease HtpX homolog (309 aa).

Helical transmembrane passes span 7-27 and 28-48; these read FILLAGLTALFVGAGYMIGGP and TGMLVALVLAVGMNLFSYWNA. Histidine 134 contributes to the Zn(2+) binding site. Glutamate 135 is an active-site residue. Histidine 138 provides a ligand contact to Zn(2+). A run of 2 helical transmembrane segments spans residues 149–169 and 177–197; these read VTATIAGAISALANFAFFFGG and PGGLVGTIALAILAPIAAMLV. Glutamate 206 is a binding site for Zn(2+). Residues 289-309 are disordered; it reads TRGRSGTAVPTGATGKSGPWG.

Belongs to the peptidase M48B family. Zn(2+) is required as a cofactor.

The protein localises to the cell inner membrane. This is Protease HtpX homolog from Caulobacter sp. (strain K31).